Reading from the N-terminus, the 548-residue chain is Glucose-6-phosphate isomerase (548 aa).

Residue glutamate 355 is the Proton donor of the active site. Active-site residues include histidine 386 and lysine 511.

The protein belongs to the GPI family.

It is found in the cytoplasm. The enzyme catalyses alpha-D-glucose 6-phosphate = beta-D-fructose 6-phosphate. It participates in carbohydrate biosynthesis; gluconeogenesis. Its pathway is carbohydrate degradation; glycolysis; D-glyceraldehyde 3-phosphate and glycerone phosphate from D-glucose: step 2/4. In terms of biological role, catalyzes the reversible isomerization of glucose-6-phosphate to fructose-6-phosphate. The polypeptide is Glucose-6-phosphate isomerase (Wigglesworthia glossinidia brevipalpis).